The sequence spans 158 residues: C-type lection lectoxin-Enh3 (158 aa).

The signal sequence occupies residues 1 to 23 (MGQFTVVSLGLLAMFLSLSGAKG). 3 disulfide bridges follow: Cys-26–Cys-37, Cys-54–Cys-154, and Cys-129–Cys-146. The 123-residue stretch at 33-155 (RNGVCNKLFP…CASLHPFICQ (123 aa)) folds into the C-type lectin domain. Residues 119-121 (EPN) carry the Mannose-binding motif. Positions 127, 142, and 143 each coordinate Ca(2+).

The protein belongs to the true venom lectin family. Expressed by the venom gland.

The protein localises to the secreted. In terms of biological role, mannose-binding lectin which recognizes specific carbohydrate structures and agglutinates a variety of animal cells by binding to cell-surface glycoproteins and glycolipids. May be a calcium-dependent lectin. This Pseudoferania polylepis (Macleay's water snake) protein is C-type lection lectoxin-Enh3.